The following is a 353-amino-acid chain: Photosystem II protein D1 (353 aa).

Thr2 bears the N-acetylthreonine mark. Thr2 carries the post-translational modification Phosphothreonine. The next 3 membrane-spanning stretches (helical) occupy residues 29–46 (YIGW…TATS), 118–133 (HFLL…EWEL), and 142–156 (WIAV…AATA). His118 contacts chlorophyll a. Tyr126 serves as a coordination point for pheophytin a. Residues Asp170 and Glu189 each contribute to the [CaMn4O5] cluster site. Residues 197–218 (FHMLGVAGVFGGSLFSAMHGSL) form a helical membrane-spanning segment. His198 contacts chlorophyll a. A quinone is bound by residues His215 and 264-265 (SF). Residue His215 coordinates Fe cation. His272 contributes to the Fe cation binding site. Residues 274–288 (FLAAWPVIGIWFTAL) form a helical membrane-spanning segment. Positions 332, 333, 342, and 344 each coordinate [CaMn4O5] cluster. A propeptide spanning residues 345–353 (AIEAPSTNG) is cleaved from the precursor.

Belongs to the reaction center PufL/M/PsbA/D family. PSII is composed of 1 copy each of membrane proteins PsbA, PsbB, PsbC, PsbD, PsbE, PsbF, PsbH, PsbI, PsbJ, PsbK, PsbL, PsbM, PsbT, PsbX, PsbY, PsbZ, Psb30/Ycf12, at least 3 peripheral proteins of the oxygen-evolving complex and a large number of cofactors. It forms dimeric complexes. The D1/D2 heterodimer binds P680, chlorophylls that are the primary electron donor of PSII, and subsequent electron acceptors. It shares a non-heme iron and each subunit binds pheophytin, quinone, additional chlorophylls, carotenoids and lipids. D1 provides most of the ligands for the Mn4-Ca-O5 cluster of the oxygen-evolving complex (OEC). There is also a Cl(-1) ion associated with D1 and D2, which is required for oxygen evolution. The PSII complex binds additional chlorophylls, carotenoids and specific lipids. is required as a cofactor. In terms of processing, tyr-161 forms a radical intermediate that is referred to as redox-active TyrZ, YZ or Y-Z. C-terminally processed by CTPA; processing is essential to allow assembly of the oxygen-evolving complex and thus photosynthetic growth.

The protein localises to the plastid. Its subcellular location is the chloroplast thylakoid membrane. It catalyses the reaction 2 a plastoquinone + 4 hnu + 2 H2O = 2 a plastoquinol + O2. Photosystem II (PSII) is a light-driven water:plastoquinone oxidoreductase that uses light energy to abstract electrons from H(2)O, generating O(2) and a proton gradient subsequently used for ATP formation. It consists of a core antenna complex that captures photons, and an electron transfer chain that converts photonic excitation into a charge separation. The D1/D2 (PsbA/PsbD) reaction center heterodimer binds P680, the primary electron donor of PSII as well as several subsequent electron acceptors. In Amaranthus hybridus (Slim amaranth), this protein is Photosystem II protein D1.